A 442-amino-acid chain; its full sequence is Tyrosine--tRNA ligase (442 aa).

Tyr-55 is an L-tyrosine binding site. The 'HIGH' region motif lies at 60 to 69; that stretch reads PTAPSLHLGN. The L-tyrosine site is built by Tyr-190 and Gln-194. A 'KMSKS' region motif is present at residues 250–254; it reads KFGKS. Lys-253 lines the ATP pocket. Residues 373 to 438 enclose the S4 RNA-binding domain; that stretch reads VAIAQALVDT…GKKTLAGVFV (66 aa).

The protein belongs to the class-I aminoacyl-tRNA synthetase family. TyrS type 1 subfamily. In terms of assembly, homodimer.

It is found in the cytoplasm. The enzyme catalyses tRNA(Tyr) + L-tyrosine + ATP = L-tyrosyl-tRNA(Tyr) + AMP + diphosphate + H(+). Functionally, catalyzes the attachment of tyrosine to tRNA(Tyr) in a two-step reaction: tyrosine is first activated by ATP to form Tyr-AMP and then transferred to the acceptor end of tRNA(Tyr). The polypeptide is Tyrosine--tRNA ligase (Leifsonia xyli subsp. xyli (strain CTCB07)).